We begin with the raw amino-acid sequence, 421 residues long: Galactooligosaccharide-binding protein (421 aa).

The signal sequence occupies residues 1 to 22 (MKMAKKCSVFMLCAAVSLSLAA). Residue cysteine 23 is the site of N-palmitoyl cysteine attachment. Cysteine 23 carries the S-diacylglycerol cysteine lipid modification. The interval 393-421 (ATGKADPKQALDQAAETAKGQIKAKHSGK) is disordered.

This sequence belongs to the bacterial solute-binding protein 1 family. As to quaternary structure, the complex is composed of two ATP-binding proteins (MsmX), two transmembrane proteins (GanP and GanQ) and a solute-binding protein (GanS).

It is found in the cell membrane. Its function is as follows. Involved in galactan degradation. Part of the ABC transporter complex GanPQS involved in the uptake of galactooligosaccharides. Binds mainly galactotetraose and galactotriose. This is Galactooligosaccharide-binding protein from Bacillus subtilis (strain 168).